Here is a 533-residue protein sequence, read N- to C-terminus: Nuclear receptor corepressor 1 (533 aa).

Positions 1–17 are enriched in basic and acidic residues; the sequence is KDKGPPPKSRYEEELRT. Residues 1 to 21 are disordered; that stretch reads KDKGPPPKSRYEEELRTRGKT. Residues 29–33 carry the CORNR box 1 motif; sequence IDVII. The tract at residues 37-144 is disordered; it reads IASDKDARER…EGMGQVPRTH (108 aa). Positions 38-47 are enriched in basic and acidic residues; that stretch reads ASDKDARERG. Positions 48-59 are enriched in low complexity; it reads SQSSDSSSSLSS. Phosphoserine occurs at positions 73 and 77. The tract at residues 130–209 is ID1; that stretch reads PSSQAEGMGQ…QSQTVLHPRP (80 aa). Positions 145–148 are required for interaction with RARA in the absence of its ligand; it reads RLIT. A CORNR box 2 motif is present at residues 153–157; the sequence is ICQII. The segment covering 165 to 180 has biased composition (low complexity); sequence QVPSQPSTSTFQTSPS. A disordered region spans residues 165 to 254; sequence QVPSQPSTST…SPPQGPAVHE (90 aa). Residues 181-204 show a composition bias toward polar residues; sequence ALSSTPVRTKPSSRYSPESQSQTV. 5 positions are modified to phosphoserine: S196, S214, S230, S245, and S278. Basic and acidic residues predominate over residues 218-236; that stretch reads LVDKSRGSRPGKSPERSHI. The tract at residues 306-367 is ID2; it reads IFRKLNSSGG…EDIIRKALMG (62 aa). Positions 357–361 match the CORNR box 3 motif; that stretch reads LEDII. Residues 382 to 399 are compositionally biased toward low complexity; the sequence is HPVGVVPGSASTSVVTSS. The segment at 382-476 is disordered; it reads HPVGVVPGSA…RPSSTGSTQF (95 aa). T492 carries the post-translational modification Phosphothreonine. Phosphoserine is present on residues S529 and S531.

This sequence belongs to the N-CoR nuclear receptor corepressors family. As to quaternary structure, forms a large corepressor complex that contains SIN3A/B and histone deacetylases HDAC1 and HDAC2. This complex associates with the thyroid receptor (TR) and the retinoid acid receptor (RAR) in the absence of ligand. Interacts directly with RARA; the interaction is facilitated with RARA trimethylation. Component of the N-Cor repressor complex, at least composed of CBFA2T3, HEXIM1, NCOR1, NCOR2, HDAC3, TBL1X, TBL1XR1, CORO2A and GPS2. Interacts with ZBTB33; the interaction serves to recruit the N-CoR complex to promoter regions containing methylated CpG dinucleotides. Interacts with TRIM28 and KDM3A. Interacts (via the RD1 domain) with BAZ1A (via its N-terminal); the interaction corepresses a number of NCOR1-regulated genes. Interacts with BCL6, C1D, DACH1, HEXIM1, HDAC7, RORA, RORC, SAP30, SIAH2, SIN3A and SIN3B. May interact with DEAF1. Interacts with RXRA. Interacts with SETD5. Interacts with VDR. Interacts with ZBTB7A. Interacts with AR. Interacts with HDAC3. In terms of processing, ubiquitinated; mediated by SIAH2 and leading to its subsequent proteasomal degradation.

The protein localises to the nucleus. In terms of biological role, mediates transcriptional repression by certain nuclear receptors. Part of a complex which promotes histone deacetylation and the formation of repressive chromatin structures which may impede the access of basal transcription factors. Participates in the transcriptional repressor activity produced by BCL6. Recruited by ZBTB7A to the androgen response elements/ARE on target genes, negatively regulates androgen receptor signaling and androgen-induced cell proliferation. Mediates the NR1D1-dependent repression and circadian regulation of TSHB expression. The NCOR1-HDAC3 complex regulates the circadian expression of the core clock gene ARTNL/BMAL1 and the genes involved in lipid metabolism in the liver. This is Nuclear receptor corepressor 1 (Ncor1) from Rattus norvegicus (Rat).